Here is a 79-residue protein sequence, read N- to C-terminus: Defensin-like protein 3 (79 aa).

The signal sequence occupies residues 1-29 (MAKFASIITLLFAALVVFAAFEAPTMVEA). 4 disulfides stabilise this stretch: C32–C79, C43–C64, C49–C73, and C53–C75.

Belongs to the DEFL family.

The protein resides in the secreted. In terms of biological role, possesses antifungal activity sensitive to inorganic cations. In Brassica napus (Rape), this protein is Defensin-like protein 3 (AFP3).